We begin with the raw amino-acid sequence, 125 residues long: Small ribosomal subunit protein uS12 (125 aa).

Aspartate 89 carries the post-translational modification 3-methylthioaspartic acid.

Belongs to the universal ribosomal protein uS12 family. Part of the 30S ribosomal subunit. Contacts proteins S8 and S17. May interact with IF1 in the 30S initiation complex.

Functionally, with S4 and S5 plays an important role in translational accuracy. In terms of biological role, interacts with and stabilizes bases of the 16S rRNA that are involved in tRNA selection in the A site and with the mRNA backbone. Located at the interface of the 30S and 50S subunits, it traverses the body of the 30S subunit contacting proteins on the other side and probably holding the rRNA structure together. The combined cluster of proteins S8, S12 and S17 appears to hold together the shoulder and platform of the 30S subunit. The chain is Small ribosomal subunit protein uS12 from Cupriavidus necator (strain ATCC 17699 / DSM 428 / KCTC 22496 / NCIMB 10442 / H16 / Stanier 337) (Ralstonia eutropha).